A 96-amino-acid polypeptide reads, in one-letter code: Co-chaperonin GroES (96 aa).

The protein belongs to the GroES chaperonin family. In terms of assembly, heptamer of 7 subunits arranged in a ring. Interacts with the chaperonin GroEL.

The protein resides in the cytoplasm. In terms of biological role, together with the chaperonin GroEL, plays an essential role in assisting protein folding. The GroEL-GroES system forms a nano-cage that allows encapsulation of the non-native substrate proteins and provides a physical environment optimized to promote and accelerate protein folding. GroES binds to the apical surface of the GroEL ring, thereby capping the opening of the GroEL channel. In Albidiferax ferrireducens (strain ATCC BAA-621 / DSM 15236 / T118) (Rhodoferax ferrireducens), this protein is Co-chaperonin GroES.